The sequence spans 559 residues: PHD finger protein 1 (559 aa).

Positions 29–86 (PRLWEGQDVLARWTDGLLYLGTIKKVDSAREVCLVQFEDDSQFLVLWKDISPAALPGE) constitute a Tudor domain. 2 consecutive PHD-type zinc fingers follow at residues 87–142 (ELLC…CVFA) and 186–240 (QSYC…CRGG). Disordered regions lie at residues 338 to 434 (PVEL…TDAR) and 448 to 526 (HPSA…GGVS). Basic and acidic residues predominate over residues 369–386 (WRSEPEPLRRRQKGKVEE). Composition is skewed to polar residues over residues 417 to 426 (NQSYEGSSGY) and 449 to 459 (PSASTAGTSGD). Low complexity predominate over residues 481–515 (SSPHSVTASSSSVPALTPGFSRHSPPSPLCRSLSP).

The protein belongs to the Polycomblike family. As to quaternary structure, associated component of the PRC2 complex. Interacts with p53/TP53. Interacts with CHMP1. Testis-specific.

The protein resides in the nucleus. It is found in the cytoplasm. Its subcellular location is the cytoskeleton. It localises to the microtubule organizing center. The protein localises to the centrosome. In terms of biological role, polycomb group (PcG) that specifically binds histone H3 trimethylated at 'Lys-36' (H3K36me3) and recruits the PRC2 complex. Involved in DNA damage response and is recruited at double-strand breaks (DSBs). Acts by binding to H3K36me3, a mark for transcriptional activation, and recruiting the PRC2 complex: it is however unclear whether recruitment of the PRC2 complex to H3K36me3 leads to enhance or inhibit H3K27me3 methylation mediated by the PRC2 complex. According to some reports, PRC2 recruitment by PHF1 promotes H3K27me3 and subsequent gene silencing by inducing spreading of PRC2 and H3K27me3 into H3K36me3 loci. According to other reports, PHF1 recruits the PRC2 complex at double-strand breaks (DSBs) and inhibits the activity of PRC2. Regulates p53/TP53 stability and prolonges its turnover: may act by specifically binding to a methylated from of p53/TP53. The chain is PHD finger protein 1 (Phf1) from Mus musculus (Mouse).